The primary structure comprises 756 residues: Cellulose synthase catalytic subunit [UDP-forming] (756 aa).

4 consecutive transmembrane segments (helical) span residues 27-47, 49-69, 106-126, and 167-187; these read ASYI…TVTL, NNEQ…VGRG, GILG…LFLS, and LTVL…VYIL. The tract at residues 147 to 242 is catalytic subdomain A; that stretch reads DWPTVDIFIP…YILILDCDHI (96 aa). The active site involves D189. Substrate contacts are provided by D238 and D240. A catalytic subdomain B region spans residues 319-379; sequence EAIESIGGFA…GQRMRWARGM (61 aa). D335 is an active-site residue. 5 helical membrane-spanning segments follow: residues 409–429, 432–452, 470–490, 517–537, and 551–571; these read FFFA…LFAG, IIAA…FHSI, VYET…LLFP, NIIF…ELIV, and LLNC…IAVG. The PilZ domain occupies 576-681; the sequence is QVRYNHRVEA…ERDIVRFVFG (106 aa). The segment at 721–756 is disordered; that stretch reads NSRPKKKPLALPVERREPTTIHSGQTQEGKISRAAS. Positions 740–756 are enriched in polar residues; sequence TIHSGQTQEGKISRAAS.

It belongs to the glycosyltransferase 2 family. Requires Mg(2+) as cofactor.

The protein resides in the cell inner membrane. The catalysed reaction is [(1-&gt;4)-beta-D-glucosyl](n) + UDP-alpha-D-glucose = [(1-&gt;4)-beta-D-glucosyl](n+1) + UDP + H(+). The protein operates within glycan metabolism; bacterial cellulose biosynthesis. Its activity is regulated as follows. Activated by bis-(3'-5') cyclic diguanylic acid (c-di-GMP). Functionally, catalytic subunit of cellulose synthase. It polymerizes uridine 5'-diphosphate glucose to cellulose. The thick cellulosic mats generated by this enzyme probably provide a specialized protective environment to the bacterium. The protein is Cellulose synthase catalytic subunit [UDP-forming] (bcsA) of Komagataeibacter sucrofermentans (strain ATCC 700178 / DSM 15973 / CECT 7291 / JCM 9730 / LMG 18788 / BPR 2001) (Acetobacter xylinus subsp. sucrofermentans).